We begin with the raw amino-acid sequence, 784 residues long: Homeobox-leucine zipper protein ROC2 (784 aa).

Positions 60–113 (AESGDNMIRSRASDPLGGDEFESKSGSENVDGVSVDDQDPNQRPRKKRYHRHTQ) are disordered. A compositionally biased stretch (basic residues) spans 102 to 113 (RPRKKRYHRHTQ). The homeobox DNA-binding region spans 104 to 163 (RKKRYHRHTQHQIQEMEAFFKECPHPDDKQRKELSRELGLEPLQVKFWFQNKRTQMKNQH). Positions 158-234 (QMKNQHERHE…DRISAIAAKY (77 aa)) form a coiled coil. The 238-residue stretch at 286–523 (SEVDKPMIVE…LDRQCERLAS (238 aa)) folds into the START domain.

Belongs to the HD-ZIP homeobox family. Class IV subfamily.

Its subcellular location is the nucleus. In terms of biological role, probable transcription factor. This chain is Homeobox-leucine zipper protein ROC2 (ROC2), found in Oryza sativa subsp. japonica (Rice).